A 436-amino-acid polypeptide reads, in one-letter code: 3-phosphoshikimate 1-carboxyvinyltransferase (436 aa).

3 residues coordinate 3-phosphoshikimate: Lys-23, Ser-24, and Arg-28. Lys-23 provides a ligand contact to phosphoenolpyruvate. 2 residues coordinate phosphoenolpyruvate: Gly-97 and Arg-126. 4 residues coordinate 3-phosphoshikimate: Ser-171, Gln-173, Asp-323, and Lys-350. Phosphoenolpyruvate is bound at residue Gln-173. Asp-323 functions as the Proton acceptor in the catalytic mechanism. The phosphoenolpyruvate site is built by Arg-354 and Arg-396.

The protein belongs to the EPSP synthase family. In terms of assembly, monomer.

The protein localises to the cytoplasm. It catalyses the reaction 3-phosphoshikimate + phosphoenolpyruvate = 5-O-(1-carboxyvinyl)-3-phosphoshikimate + phosphate. It participates in metabolic intermediate biosynthesis; chorismate biosynthesis; chorismate from D-erythrose 4-phosphate and phosphoenolpyruvate: step 6/7. Its function is as follows. Catalyzes the transfer of the enolpyruvyl moiety of phosphoenolpyruvate (PEP) to the 5-hydroxyl of shikimate-3-phosphate (S3P) to produce enolpyruvyl shikimate-3-phosphate and inorganic phosphate. In Prochlorococcus marinus (strain MIT 9301), this protein is 3-phosphoshikimate 1-carboxyvinyltransferase.